The sequence spans 212 residues: NAD(P)H-hydrate epimerase (212 aa).

In terms of domain architecture, YjeF N-terminal spans 10 to 212; it reads MRSLERAAIA…IGVIVKPIGL (203 aa). 65–69 contacts (6S)-NADPHX; it reads NNGGD. Positions 66 and 129 each coordinate K(+). Residues 133–139 and Asp-161 contribute to the (6S)-NADPHX site; that span reads GLGLTRP. Ser-164 serves as a coordination point for K(+).

Belongs to the NnrE/AIBP family. The cofactor is K(+).

It carries out the reaction (6R)-NADHX = (6S)-NADHX. It catalyses the reaction (6R)-NADPHX = (6S)-NADPHX. In terms of biological role, catalyzes the epimerization of the S- and R-forms of NAD(P)HX, a damaged form of NAD(P)H that is a result of enzymatic or heat-dependent hydration. This is a prerequisite for the S-specific NAD(P)H-hydrate dehydratase to allow the repair of both epimers of NAD(P)HX. The chain is NAD(P)H-hydrate epimerase from Rhodobacter capsulatus (strain ATCC BAA-309 / NBRC 16581 / SB1003).